The following is a 393-amino-acid chain: Probable acetyl-CoA acyltransferase (393 aa).

The active-site Acyl-thioester intermediate is Cys-88. Active-site proton acceptor residues include His-349 and Cys-378.

It belongs to the thiolase-like superfamily. Thiolase family.

The protein resides in the cytoplasm. It carries out the reaction 2 acetyl-CoA = acetoacetyl-CoA + CoA. This is Probable acetyl-CoA acyltransferase from Staphylococcus aureus (strain NCTC 8325 / PS 47).